Consider the following 99-residue polypeptide: Large ribosomal subunit protein uL23 (99 aa).

The protein belongs to the universal ribosomal protein uL23 family. Part of the 50S ribosomal subunit. Contacts protein L29, and trigger factor when it is bound to the ribosome.

Functionally, one of the early assembly proteins it binds 23S rRNA. One of the proteins that surrounds the polypeptide exit tunnel on the outside of the ribosome. Forms the main docking site for trigger factor binding to the ribosome. In Pseudomonas entomophila (strain L48), this protein is Large ribosomal subunit protein uL23.